The primary structure comprises 298 residues: UDP-N-acetylenolpyruvoylglucosamine reductase (298 aa).

The FAD-binding PCMH-type domain occupies 26–191; it reads KTGGEAEYLA…LSATFSLKPG (166 aa). The active site involves Arg-170. Ser-220 acts as the Proton donor in catalysis. The active site involves Glu-290.

This sequence belongs to the MurB family. It depends on FAD as a cofactor.

It localises to the cytoplasm. The enzyme catalyses UDP-N-acetyl-alpha-D-muramate + NADP(+) = UDP-N-acetyl-3-O-(1-carboxyvinyl)-alpha-D-glucosamine + NADPH + H(+). It functions in the pathway cell wall biogenesis; peptidoglycan biosynthesis. In terms of biological role, cell wall formation. The sequence is that of UDP-N-acetylenolpyruvoylglucosamine reductase from Lactobacillus acidophilus (strain ATCC 700396 / NCK56 / N2 / NCFM).